The primary structure comprises 562 residues: MDAMKRGLCCVLLLCGAVFVSPSQEIHARFRRGARSYQVICRDEKTQMIYQQHQSWLRPVLRSNRVEYCWCNSGRAQCHSVPVKSCSEPRCFNGGTCQQALYFSDFVCQCPEGFAGKCCEIDTRATCYEDQGISYRGTWSTAESGAECTNWNSSALAQKPYSGRRPDAIRLGLGNHNYCRNPDRDSKPWCYVFKAGKYSSEFCSTPACSEGNSDCYFGNGSAYRGTHSLTESGASCLPWNSMILIGKVYTAQNPSAQALGLGKHNYCRNPDGDAKPWCHVLKNRRLTWEYCDVPSCSTCGLRQYSQPQFRIKGGLFADIASHPWQAAIFAKHRRSPGERFLCGGILISSCWILSAAHCFQERFPPHHLTVILGRTYRVVPGEEEQKFEVEKYIVHKEFDDDTYDNDIALLQLKSDSSRCAQESSVVRTVCLPPADLQLPDWTECELSGYGKHEALSPFYSERLKEAHVRLYPSSRCTSQHLLNRTVTDNMLCAGDTRSGGPQANLHDACQGDSGGPLVCLNDGRMTLVGIISWGLGCGQKDVPGVYTKVTNYLDWIRDNMRP.

The first 22 residues, 1–22 (MDAMKRGLCCVLLLCGAVFVSP), serve as a signal peptide directing secretion. Positions 23–32 (SQEIHARFRR) are excised as a propeptide. A propeptide spans 33–35 (GAR) (removed by plasmin). The 43-residue stretch at 39–81 (VICRDEKTQMIYQQHQSWLRPVLRSNRVEYCWCNSGRAQCHSV) folds into the Fibronectin type-I domain. Disulfide bonds link Cys41/Cys71, Cys69/Cys78, Cys86/Cys97, Cys91/Cys108, Cys110/Cys119, Cys127/Cys208, Cys148/Cys190, Cys179/Cys203, Cys215/Cys296, Cys236/Cys278, Cys267/Cys291, Cys299/Cys430, Cys342/Cys358, Cys350/Cys419, Cys444/Cys519, Cys476/Cys492, and Cys509/Cys537. The tract at residues 42–52 (RDEKTQMIYQQ) is important for binding to annexin A2. Residues 82–120 (PVKSCSEPRCFNGGTCQQALYFSDFVCQCPEGFAGKCCE) enclose the EGF-like domain. Thr96 is a glycosylation site (O-linked (Fuc) threonine). 2 consecutive Kringle domains span residues 127–208 (CYED…TPAC) and 215–296 (CYFG…VPSC). An N-linked (GlcNAc...) asparagine glycan is attached at Asn152. Asn219 is a glycosylation site (N-linked (GlcNAc...) asparagine; partial). The region spanning 311–561 (IKGGLFADIA…YLDWIRDNMR (251 aa)) is the Peptidase S1 domain. Residues His357 and Asp406 each act as charge relay system in the active site. Asn483 is a glycosylation site (N-linked (GlcNAc...) asparagine). Catalysis depends on Ser513, which acts as the Charge relay system.

It belongs to the peptidase S1 family. As to quaternary structure, heterodimer of chain A and chain B held by a disulfide bond. Forms a heterodimer with SERPINA5. Binds to fibrin with high affinity. This interaction leads to an increase in the catalytic efficiency of the enzyme between 100-fold and 1000-fold, due to an increase in affinity for plasminogen. Similarly, binding to heparin increases the activation of plasminogen. Binds to annexin A2, cytokeratin-8, fibronectin and laminin. Binds to mannose receptor and the low-density lipoprotein receptor-related protein (LRP1); these proteins are involved in TPA clearance. Yet unidentified interactions on endothelial cells and vascular smooth muscle cells (VSMC) lead to a 100-fold stimulation of plasminogen activation. In addition, binding to VSMC reduces TPA inhibition by PAI-1 by 30-fold. Binds LRP1B; binding is followed by internalization and degradation. Interacts with SERPINE1. In complex with SERPINE1, interacts with SORL1. Interacts with apyrase from Anopheles gambiae saliva; the interaction results in PLAT activation probably via an allosteric activation mechanism. Post-translationally, the single chain, almost fully active enzyme, can be further processed into a two-chain fully active form by a cleavage after Arg-310 catalyzed by plasmin, tissue kallikrein or factor Xa. In terms of processing, differential cell-specific N-linked glycosylation gives rise to two glycoforms, type I (glycosylated at Asn-219) and type II (not glycosylated at Asn-219). The single chain type I glycoform is less readily converted into the two-chain form by plasmin, and the two-chain type I glycoform has a lower activity than the two-chain type II glycoform in the presence of fibrin. N-glycosylation of Asn-152; the bound oligomannosidic glycan is involved in the interaction with the mannose receptor. Post-translationally, characterization of O-linked glycan was studied in Bowes melanoma cell line. As to expression, synthesized in numerous tissues (including tumors) and secreted into most extracellular body fluids, such as plasma, uterine fluid, saliva, gingival crevicular fluid, tears, seminal fluid, and milk.

The protein localises to the secreted. It localises to the extracellular space. It carries out the reaction Specific cleavage of Arg-|-Val bond in plasminogen to form plasmin.. Inhibited by SERPINA5. Inhibited by SERPINE1. In terms of biological role, converts the abundant, but inactive, zymogen plasminogen to plasmin by hydrolyzing a single Arg-Val bond in plasminogen. By controlling plasmin-mediated proteolysis, it plays an important role in tissue remodeling and degradation, in cell migration and many other physiopathological events. During oocyte activation, plays a role in cortical granule reaction in the zona reaction, which contributes to the block to polyspermy. This Homo sapiens (Human) protein is Tissue-type plasminogen activator.